We begin with the raw amino-acid sequence, 2027 residues long: Mediator of RNA polymerase II transcription subunit 12 (2027 aa).

A Phosphotyrosine modification is found at Tyr13. 4 disordered regions span residues 170 to 191 (QSTS…TPST), 474 to 516 (GAPG…MDID), 538 to 563 (MPCE…PPKE), and 1088 to 1113 (TVTG…QGGR). Phosphoserine is present on residues Ser482, Ser512, Ser545, and Ser547. Basic and acidic residues predominate over residues 549–563 (EKPDVEKEVKPPPKE). Ser1105 and Ser1116 each carry phosphoserine. The segment covering 1241–1258 (AETGSSSGSTASNMPSSS) has biased composition (low complexity). Disordered stretches follow at residues 1241-1262 (AETG…KTKP), 1297-1321 (ELEK…KSMS), and 1585-1676 (YLEP…PGSI). Basic and acidic residues-rich tracts occupy residues 1297–1316 (ELEK…DRQK) and 1605–1618 (EPEK…KTDK). Residues 1463–1901 (LAKKLQKELG…VRSTAILPEQ (439 aa)) are interaction with CTNNB1 and GLI3. The span at 1631 to 1640 (KKSTKGKKRS) shows a compositional bias: basic residues. Lys1645 carries the post-translational modification N6-acetyllysine. An Asymmetric dimethylarginine; alternate modification is found at Arg1746. Position 1746 is an omega-N-methylarginine; alternate (Arg1746). Arg1757 carries the omega-N-methylarginine modification. The disordered stretch occupies residues 1805-1848 (QHTGPAGTMVPPSYSSQPYQSTHPSTNPTLVDPTRHLQQRPSGY). Positions 1815 to 1830 (PPSYSSQPYQSTHPST) are enriched in low complexity. 2 positions are modified to asymmetric dimethylarginine: Arg1844 and Arg1865. Composition is skewed to low complexity over residues 1965–1975 (QHQQQQQQQAA), 1983–1999 (SQPQ…QQQQ), and 2008–2021 (LQQQ…QPST). Disordered regions lie at residues 1965-1999 (QHQQ…QQQQ) and 2008-2027 (LQQQ…FGRY).

The protein belongs to the Mediator complex subunit 12 family. In terms of assembly, component of the Mediator complex, which is composed of MED1, MED4, MED6, MED7, MED8, MED9, MED10, MED11, MED12, MED13, MED13L, MED14, MED15, MED16, MED17, MED18, MED19, MED20, MED21, MED22, MED23, MED24, MED25, MED26, MED27, MED29, MED30, MED31, CCNC, CDK8 and CDC2L6/CDK11. The MED12, MED13, CCNC and CDK8 subunits form a distinct module termed the CDK8 module. Mediator containing the CDK8 module is less active than Mediator lacking this module in supporting transcriptional activation. Individual preparations of the Mediator complex lacking one or more distinct subunits have been variously termed ARC, CRSP, DRIP, PC2, SMCC and TRAP. Also interacts with CTNNB1 and GLI3.

It localises to the nucleus. Component of the Mediator complex, a coactivator involved in the regulated transcription of nearly all RNA polymerase II-dependent genes. Mediator functions as a bridge to convey information from gene-specific regulatory proteins to the basal RNA polymerase II transcription machinery. Mediator is recruited to promoters by direct interactions with regulatory proteins and serves as a scaffold for the assembly of a functional preinitiation complex with RNA polymerase II and the general transcription factors. This subunit may specifically regulate transcription of targets of the Wnt signaling pathway and SHH signaling pathway. The sequence is that of Mediator of RNA polymerase II transcription subunit 12 (MED12) from Pan troglodytes (Chimpanzee).